The primary structure comprises 262 residues: Cytochrome c oxidase subunit 3 (262 aa).

A run of 7 helical transmembrane segments spans residues 11–31, 32–52, 83–103, 125–147, 160–180, 198–218, and 240–260; these read LVEP…LTVG, LVMW…VMIV, GMVL…WAFF, LNAF…TVTW, AIQS…LQAW, FFVA…FLMV, and AWYW…IYWW.

The protein belongs to the cytochrome c oxidase subunit 3 family. In terms of assembly, component of the cytochrome c oxidase (complex IV, CIV), a multisubunit enzyme composed of a catalytic core of 3 subunits and several supernumerary subunits. The complex exists as a monomer or a dimer and forms supercomplexes (SCs) in the inner mitochondrial membrane with ubiquinol-cytochrome c oxidoreductase (cytochrome b-c1 complex, complex III, CIII).

The protein localises to the mitochondrion inner membrane. It catalyses the reaction 4 Fe(II)-[cytochrome c] + O2 + 8 H(+)(in) = 4 Fe(III)-[cytochrome c] + 2 H2O + 4 H(+)(out). Its function is as follows. Component of the cytochrome c oxidase, the last enzyme in the mitochondrial electron transport chain which drives oxidative phosphorylation. The respiratory chain contains 3 multisubunit complexes succinate dehydrogenase (complex II, CII), ubiquinol-cytochrome c oxidoreductase (cytochrome b-c1 complex, complex III, CIII) and cytochrome c oxidase (complex IV, CIV), that cooperate to transfer electrons derived from NADH and succinate to molecular oxygen, creating an electrochemical gradient over the inner membrane that drives transmembrane transport and the ATP synthase. Cytochrome c oxidase is the component of the respiratory chain that catalyzes the reduction of oxygen to water. Electrons originating from reduced cytochrome c in the intermembrane space (IMS) are transferred via the dinuclear copper A center (CU(A)) of subunit 2 and heme A of subunit 1 to the active site in subunit 1, a binuclear center (BNC) formed by heme A3 and copper B (CU(B)). The BNC reduces molecular oxygen to 2 water molecules using 4 electrons from cytochrome c in the IMS and 4 protons from the mitochondrial matrix. The protein is Cytochrome c oxidase subunit 3 (COIII) of Branchiostoma floridae (Florida lancelet).